A 348-amino-acid chain; its full sequence is Erlin-1 (348 aa).

The Cytoplasmic segment spans residues 1-7 (MNMTQAR). A helical membrane pass occupies residues 8–28 (LLVAAVVGLVAILLYASIHKI). The Lumenal portion of the chain corresponds to 29 to 348 (EEGHLAVYYR…SPIQNKENAG (320 aa)). Asn-108 carries an N-linked (GlcNAc...) asparagine glycan. Lys-269 bears the N6-acetyllysine mark. Over residues 318–336 (DGRTGREDSLPPEEAREPS) the composition is skewed to basic and acidic residues. Residues 318 to 348 (DGRTGREDSLPPEEAREPSGESPIQNKENAG) form a disordered region. Over residues 339–348 (SPIQNKENAG) the composition is skewed to polar residues.

This sequence belongs to the band 7/mec-2 family. As to quaternary structure, forms a heteromeric complex with ERLIN2. In complex with ERLIN2, interacts with RNF170. Interacts with AMFR and SYVN1. Post-translationally, deubiquitinated by USP25; leading to stabilization.

The protein resides in the endoplasmic reticulum membrane. In terms of biological role, component of the ERLIN1/ERLIN2 complex which mediates the endoplasmic reticulum-associated degradation (ERAD) of inositol 1,4,5-trisphosphate receptors (IP3Rs). Involved in regulation of cellular cholesterol homeostasis by regulation the SREBP signaling pathway. Binds cholesterol and may promote ER retention of the SCAP-SREBF complex. The chain is Erlin-1 from Mus musculus (Mouse).